The chain runs to 143 residues: Large ribosomal subunit protein eL28y (143 aa).

It belongs to the eukaryotic ribosomal protein eL28 family.

The chain is Large ribosomal subunit protein eL28y (RPL28C) from Arabidopsis thaliana (Mouse-ear cress).